Reading from the N-terminus, the 89-residue chain is Small ribosomal subunit protein uS15 (89 aa).

This sequence belongs to the universal ribosomal protein uS15 family. In terms of assembly, part of the 30S ribosomal subunit. Forms a bridge to the 50S subunit in the 70S ribosome, contacting the 23S rRNA.

Functionally, one of the primary rRNA binding proteins, it binds directly to 16S rRNA where it helps nucleate assembly of the platform of the 30S subunit by binding and bridging several RNA helices of the 16S rRNA. In terms of biological role, forms an intersubunit bridge (bridge B4) with the 23S rRNA of the 50S subunit in the ribosome. The polypeptide is Small ribosomal subunit protein uS15 (Lysinibacillus sphaericus (strain C3-41)).